The chain runs to 285 residues: K88 fimbrial protein AD (285 aa).

A signal peptide spans 1 to 21 (MKKTLIALAIAASAASGMAHA).

This sequence belongs to the fimbrial K88 protein family. As to quaternary structure, K88 fimbria, 0.1-1 micrometer in length and 7 nanometers in diameter, is composed of about 100 identical subunits.

The protein resides in the fimbrium. In terms of biological role, K88 major fimbrial subunit. Fimbriae (also called pili), are polar filaments radiating from the surface of the bacterium to a length of 0.5-1.5 micrometers and numbering 100-300 per cell. They enable bacteria to colonize the epithelium of specific host organs. The chain is K88 fimbrial protein AD (faeG) from Escherichia coli.